The primary structure comprises 384 residues: Putative 8-amino-7-oxononanoate synthase (384 aa).

Arginine 19 is a substrate binding site. 106-107 (GY) is a pyridoxal 5'-phosphate binding site. Histidine 131 is a substrate binding site. Residues serine 177, 202–205 (DDAH), and 233–236 (TLSK) each bind pyridoxal 5'-phosphate. The residue at position 236 (lysine 236) is an N6-(pyridoxal phosphate)lysine.

It belongs to the class-II pyridoxal-phosphate-dependent aminotransferase family. BioF subfamily. In terms of assembly, homodimer. Pyridoxal 5'-phosphate is required as a cofactor.

It catalyses the reaction 6-carboxyhexanoyl-[ACP] + L-alanine + H(+) = (8S)-8-amino-7-oxononanoate + holo-[ACP] + CO2. The protein operates within cofactor biosynthesis; biotin biosynthesis. In terms of biological role, catalyzes the decarboxylative condensation of pimeloyl-[acyl-carrier protein] and L-alanine to produce 8-amino-7-oxononanoate (AON), [acyl-carrier protein], and carbon dioxide. The polypeptide is Putative 8-amino-7-oxononanoate synthase (bioF) (Desulforudis audaxviator (strain MP104C)).